The chain runs to 842 residues: MLFLLVVAHAIAVLIFGCGFFPQKKVLDGHAALDGTHARDPVFDKLVVVVVDAMRSDFLFDASISKFHFIHEKLADGSAWGFTAHSNPPTVTLPRLKGITTGSTPNFLDAILNVAEDDTSSSLLAQDSWLWQFRNNAGKRIRFFGDDTWLKLFPPVEANEDSQTMFDEYEGTNSFFVSDFTQVDLNVTRHIDRQLRETSEWDVLILHYLGLDHIGHKDGPYSRFMGPKHEEMDSIIRKLYDELDMQSTLLVLMGDHGMNDLGNHGGSSAGETSAGMVFLSDKLAAYKPSKEQSSAKEFPMKIPSLNAGEEKTFHYLKKIQQIDVVPTISSLFNVAIPKNNVGVIIPEFLQLFKDVSLQKAIVKENWNQLSGLTKGKTQIMEETKNFVIEDVIKNMKDVQENLAKTATDYNYPLLFIGCFLSIVITGTIYYRYARHVAININTSILIAIAALMGISVFGSSFIEEEHQFWWWIITGLVLLSMVNLNFSSWKSHIIVLFCLRLIRGWNNSGQKYTYDNVIANLLKGNIDALWWLNLITVTVVGLNLKSLRFGNHTVSLLGFSDLLSMGLLSMITFLYKVNWSIVNGERVPDLFYKWVLETASLIVEDATLYREEDLIHTALIPLARIFFKLFFAVLVSRLMIQKFFQVSDISKSLAVVSRYVTIFLVFQTPSHNIGLFLFFEIINEITVHIIRERYQSDYLLAVIFGIILQFFTFFQSGGTNSIATVDLSNAYNGVSENYNIYVVGLMMCISNFAPTIYWSFYNWRITYANANSSRWQTLVAAKYPFIIIQSTIGCCLLLACIILRYHLFIWSVFSPKLCYYMVWTIFVGIIVHWIPEILLLLT.

An N-linked (GlcNAc...) asparagine glycan is attached at asparagine 186. A helical membrane pass occupies residues tyrosine 409–tyrosine 429. Asparagine 441 carries an N-linked (GlcNAc...) asparagine glycan. 2 consecutive transmembrane segments (helical) span residues threonine 442–isoleucine 462 and phenylalanine 468–serine 488. Asparagine 506 carries N-linked (GlcNAc...) asparagine glycosylation. A helical membrane pass occupies residues glycine 524–leucine 544. The N-linked (GlcNAc...) asparagine glycan is linked to asparagine 551. The chain crosses the membrane as a helical span at residues valine 554–leucine 574. N-linked (GlcNAc...) asparagine glycosylation is present at asparagine 578. The next 3 membrane-spanning stretches (helical) occupy residues isoleucine 615–valine 635, tyrosine 698–glycine 718, and isoleucine 740–phenylalanine 760. N-linked (GlcNAc...) asparagine glycosylation occurs at asparagine 771. The next 2 helical transmembrane spans lie at tyrosine 783–leucine 803 and methionine 821–leucine 841.

Belongs to the PIGG/PIGN/PIGO family. PIGG subfamily.

The protein localises to the endoplasmic reticulum membrane. Its pathway is glycolipid biosynthesis; glycosylphosphatidylinositol-anchor biosynthesis. Ethanolamine phosphate transferase involved in glycosylphosphatidylinositol-anchor biosynthesis. Transfers ethanolamine phosphate to the GPI second mannose. In Candida glabrata (strain ATCC 2001 / BCRC 20586 / JCM 3761 / NBRC 0622 / NRRL Y-65 / CBS 138) (Yeast), this protein is GPI ethanolamine phosphate transferase 2 (LAS21).